A 207-amino-acid polypeptide reads, in one-letter code: LexA repressor (207 aa).

The segment at residues 29-49 (VREICSAVDLSSTSTVHGHLA) is a DNA-binding region (H-T-H motif). Residues serine 128 and lysine 166 each act as for autocatalytic cleavage activity in the active site.

It belongs to the peptidase S24 family. In terms of assembly, homodimer.

The catalysed reaction is Hydrolysis of Ala-|-Gly bond in repressor LexA.. In terms of biological role, represses a number of genes involved in the response to DNA damage (SOS response), including recA and lexA. In the presence of single-stranded DNA, RecA interacts with LexA causing an autocatalytic cleavage which disrupts the DNA-binding part of LexA, leading to derepression of the SOS regulon and eventually DNA repair. The chain is LexA repressor from Lactobacillus johnsonii (strain CNCM I-12250 / La1 / NCC 533).